The sequence spans 714 residues: Probable metal-nicotianamine transporter YSL5 (714 aa).

Positions 17–44 (HELQETGFSPETEKVKNKNFEEDEEEED) are disordered. A compositionally biased stretch (basic and acidic residues) spans 27–36 (ETEKVKNKNF). The next 13 helical transmembrane spans lie at 67 to 87 (AFVV…KLNL), 90 to 110 (GIIP…VKTW), 135 to 155 (CVVA…LFGM), 175 to 195 (LGWI…SVVP), 236 to 256 (VLGK…FFTG), 295 to 315 (IINI…WPLI), 340 to 360 (VFIA…KVLS), 413 to 433 (IPTW…TAIL), 445 to 465 (ILVI…GAGL), 477 to 497 (LAIF…LAGL), 531 to 551 (FVSQ…VFWL), 593 to 613 (LVLC…KDSL), and 631 to 651 (FFLG…LFIW).

This sequence belongs to the YSL (TC 2.A.67.2) family.

It localises to the membrane. May be involved in the transport of nicotianamine-chelated metals. The sequence is that of Probable metal-nicotianamine transporter YSL5 (YSL5) from Arabidopsis thaliana (Mouse-ear cress).